A 674-amino-acid polypeptide reads, in one-letter code: MEAAAPEIERCDAGDVESDHDGAAAAAERVPPWREQVTARGMVAALLIGFVYTVIIMKLALTTGIIPTLNVSAALLAFLALRGWTRAPALLLPGGGAASSSSRRRPFTRQENTVVQTCAVACYTMGFGGGFGSSLLALNRKTYELAGVSTPGNSPGSYKEPGVGWMTGFLFAISFVGLLNLLPLRKALIIDYKLTYPSGTATAVLINGFHTPQGENSAKKQVRGFLNCFGISLLWSFFQWFYTGGESCGFLQFPTFGLKAWKQTFYFDFSLTYVGAGMICSHLVNLSALFGAILSWGIMWPLISIQKGKWYPGNVPESSMTSLFGYKSFMCVALIMGDGLYHFIKVTGITAKSLHERSNRRHAKKATDEDTFVIADMQRDEFFNKDYIPNWLAYAGYALLSIVAVIAIPIMFQQVKWYYVVVAFVLAPVLGFSNAYGTGLTDMNMSYNYGKIALFIFAAWGGRDNGVIAGLVGCGIVKQLVQVSADLMHDFKTGHLTLTSPRSMLVGQAIGTAMGCIIAPLTFLLFYKAFDIGNPDGYWKAPYALIFRNMAILGVEGFSALPKHCLELSAGFFAFSVLINLMRDFLPRKYRDYVPLPTAMAVPFLVGANFAIDMCVGSLIVFAWHKINSKESALLVPAVASGFICGDGIWMFPSSLLSLAKVKPPICMKFTPGS.

Residues 1-29 form a disordered region; it reads MEAAAPEIERCDAGDVESDHDGAAAAAER. Basic and acidic residues predominate over residues 7 to 22; the sequence is EIERCDAGDVESDHDG. 14 helical membrane-spanning segments follow: residues 41–61, 64–84, 118–138, 162–182, 224–244, 283–303, 329–349, 392–412, 420–440, 452–472, 506–526, 559–579, 604–624, and 633–653; these read GMVA…KLAL, GIIP…LRGW, CAVA…LLAL, GVGW…LNLL, GFLN…FYTG, LVNL…WPLI, FMCV…VTGI, LAYA…PIMF, VVVA…GTGL, IALF…AGLV, VGQA…FLLF, SALP…SVLI, FLVG…VFAW, and ALLV…WMFP.

It belongs to the YSL (TC 2.A.67.2) family. In terms of tissue distribution, expressed in phloem cells of vascular bundles in leaves and leaf sheaths. Expressed at low levels in phloem companion cells in the central cylinder of roots, but not in the epidermal or cortical cells.

It is found in the cell membrane. Involved in the phloem transport of iron and manganese and their translocation into the grain. Transports iron- and manganese-nicotianamine chelates, but not iron-phytosiderophore. The polypeptide is Metal-nicotianamine transporter YSL2 (YSL2) (Oryza sativa subsp. japonica (Rice)).